The primary structure comprises 319 residues: Protein sprouty homolog 1 (319 aa).

The residue at position 1 (M1) is an N-acetylmethionine. A disordered region spans residues 54–160; that stretch reads TEGPSVVKRP…ERAIRTQPKQ (107 aa). Residues 69–79 are compositionally biased toward basic and acidic residues; it reads PRQEKHERTHE. Over residues 112–131 the composition is skewed to low complexity; the sequence is SRSTSTGSAASSGSNSSASS. Residues 183–295 form the SPR domain; the sequence is QCGKCKCGEC…CYDWIHRPGC (113 aa).

This sequence belongs to the sprouty family. Forms heterodimers with SPRY2. Interacts with TESK1. Interacts with CAV1 (via C-terminus).

It is found in the cytoplasm. The protein localises to the membrane. In terms of biological role, inhibits fibroblast growth factor (FGF)-induced retinal lens fiber differentiation, probably by inhibiting FGF-mediated phosphorylation of ERK1/2. Inhibits TGFB-induced epithelial-to-mesenchymal transition in lens epithelial cells. This Cervus elaphus (Red deer) protein is Protein sprouty homolog 1 (SPRY1).